We begin with the raw amino-acid sequence, 429 residues long: MLIVKRTSEVKGIINAPPSKSYTHRAVISASLANGLSILKNPLNGADCLSSAHACRMLGAEITNEVEKWTIIGSKLKVPDNIIDIGNSGTTLRIITGISSQIPDGYAVITGDDSIRKRPMQPLLDALKQLGIESFSTRNNGIAPIIVKAGKITSNSVKIRGDMSSQFITSLMMTLPFSETDSEIILTTPLKSEPYLNITIDVLDKFGVKIEKIVEENKTGYKIKGKQSYRPCEYTIEGDYSSASYLIATGVLLNSDIEVKNVFKNSKQGDREIIEIVKKMGADVEINENNVKIKGPYNLKGIEIDVTNIPDLVPTIAVLGCFAEGKTVVYNGEHVRLKECDRLNACAVELSKMGADIEEKPDGLIITGTHKLTGSKLKTHDDHRLVMAFTIAGMLADGETVIEGEESVKISFPDFVDKMKSIGCNIEVI.

3-phosphoshikimate is bound by residues Lys20, Ser21, and Arg25. Lys20 lines the phosphoenolpyruvate pocket. 2 residues coordinate phosphoenolpyruvate: Gly89 and Arg118. 3-phosphoshikimate contacts are provided by Ser164, Ser165, Gln166, Ser192, Asp311, and Lys338. Gln166 lines the phosphoenolpyruvate pocket. Asp311 serves as the catalytic Proton acceptor. Phosphoenolpyruvate-binding residues include Arg342 and Arg384.

This sequence belongs to the EPSP synthase family. Monomer.

It localises to the cytoplasm. It catalyses the reaction 3-phosphoshikimate + phosphoenolpyruvate = 5-O-(1-carboxyvinyl)-3-phosphoshikimate + phosphate. Its pathway is metabolic intermediate biosynthesis; chorismate biosynthesis. Catalyzes the transfer of the enolpyruvyl moiety of phosphoenolpyruvate (PEP) to the 5-hydroxyl of shikimate-3-phosphate (S3P) to produce enolpyruvyl shikimate-3-phosphate and inorganic phosphate. This is 3-phosphoshikimate 1-carboxyvinyltransferase from Methanococcus vannielii (strain ATCC 35089 / DSM 1224 / JCM 13029 / OCM 148 / SB).